A 260-amino-acid chain; its full sequence is Flap endonuclease Xni (260 aa).

Asp-104 is a binding site for Mg(2+). Residues 160-250 enclose the 5'-3' exonuclease domain; it reads VSPQQLTDYW…NGNLQQLRLP (91 aa). The K(+) site is built by Leu-171, Ala-172, Pro-180, Val-182, and Ile-185. The segment at 184–189 is interaction with DNA; the sequence is GIGPKS.

The protein belongs to the Xni family. It depends on Mg(2+) as a cofactor. K(+) is required as a cofactor.

Has flap endonuclease activity. During DNA replication, flap endonucleases cleave the 5'-overhanging flap structure that is generated by displacement synthesis when DNA polymerase encounters the 5'-end of a downstream Okazaki fragment. The protein is Flap endonuclease Xni of Pectobacterium atrosepticum (strain SCRI 1043 / ATCC BAA-672) (Erwinia carotovora subsp. atroseptica).